Here is a 491-residue protein sequence, read N- to C-terminus: UDP-N-acetylmuramate--L-alanine ligase (491 aa).

126-132 provides a ligand contact to ATP; the sequence is GTHGKTT.

The protein belongs to the MurCDEF family.

The protein localises to the cytoplasm. It catalyses the reaction UDP-N-acetyl-alpha-D-muramate + L-alanine + ATP = UDP-N-acetyl-alpha-D-muramoyl-L-alanine + ADP + phosphate + H(+). It functions in the pathway cell wall biogenesis; peptidoglycan biosynthesis. Its function is as follows. Cell wall formation. The chain is UDP-N-acetylmuramate--L-alanine ligase from Yersinia enterocolitica serotype O:8 / biotype 1B (strain NCTC 13174 / 8081).